The primary structure comprises 535 residues: EGF domain-specific O-linked N-acetylglucosamine transferase (535 aa).

The N-terminal stretch at 1–16 is a signal peptide; that stretch reads MFILLMFVLLLQEILA. N-linked (GlcNAc...) asparagine glycans are attached at residues Asn22 and Asn271. The Required for optimal activity motif lies at 303–305; it reads DYD. N-linked (GlcNAc...) asparagine glycans are attached at residues Asn362 and Asn501.

The protein belongs to the glycosyltransferase 61 family.

Its subcellular location is the endoplasmic reticulum lumen. It carries out the reaction L-seryl-[protein] + UDP-N-acetyl-alpha-D-glucosamine = 3-O-(N-acetyl-beta-D-glucosaminyl)-L-seryl-[protein] + UDP + H(+). The catalysed reaction is L-threonyl-[protein] + UDP-N-acetyl-alpha-D-glucosamine = 3-O-(N-acetyl-beta-D-glucosaminyl)-L-threonyl-[protein] + UDP + H(+). Catalyzes the transfer of a single N-acetylglucosamine from UDP-GlcNAc to a serine or threonine residue in extracellular proteins resulting in their modification with a beta-linked N-acetylglucosamine (O-GlcNAc). Specifically glycosylates the Thr residue located between the fifth and sixth conserved cysteines of folded EGF-like domains. In Gallus gallus (Chicken), this protein is EGF domain-specific O-linked N-acetylglucosamine transferase (EOGT).